We begin with the raw amino-acid sequence, 63 residues long: Beta-defensin 5 (63 aa).

The first 22 residues, 1-22 (MRIHYLLFSFLLVLLSPLSVFT), serve as a signal peptide directing secretion. At Gln-23 the chain carries Pyrrolidone carboxylic acid. Cystine bridges form between Cys-31-Cys-59, Cys-38-Cys-52, and Cys-42-Cys-60.

This sequence belongs to the beta-defensin family.

Its subcellular location is the secreted. Has antibacterial activity. This Rattus norvegicus (Rat) protein is Beta-defensin 5 (Defb5).